Reading from the N-terminus, the 339-residue chain is MIDDRKLQILRAIIQDYISTGEPVGSRTIAKKYNLGVSSATIRNEMADLEDMGFLEQPHTSAGRIPSSRGYRLYVDRMIEFERLSSEEEGLIRNSIIDGTLYEVDKIIKQTSALLSELTKMTCIVKAPSVHKSFVKSIQLLKVDDVSILCVLVTDNGVIRNTVIKVKSVPISEELIKISKIITERLKNLTIEQINLEVISNLNRALNGYEDIVNAVLPALYESLKGDETSEVFLEGTINIFNYPEYNNIHKAKEILELLHDKKSISELISDSDDMTVKIGDEIFVPEAKECSIISAGYHVGDRSLGTIALIGPRRINYSKVLSIMTEVMKELNETLKNK.

The protein belongs to the HrcA family.

Negative regulator of class I heat shock genes (grpE-dnaK-dnaJ and groELS operons). Prevents heat-shock induction of these operons. The chain is Heat-inducible transcription repressor HrcA from Clostridium perfringens (strain SM101 / Type A).